Reading from the N-terminus, the 134-residue chain is Outer membrane lipoprotein RcsF (134 aa).

Residues 1–15 form the signal peptide; it reads MRALPICLVALMLSG. C16 carries the N-palmitoyl cysteine lipid modification. C16 carries S-diacylglycerol cysteine lipidation. Disordered stretches follow at residues 22–48 and 67–88; these read SPVEPVQSTAPQPKAEPAKPKAPRATP and GEVSGDSCQASNQDSPPSIPTA. Residues 72–82 are compositionally biased toward polar residues; it reads DSCQASNQDSP. Intrachain disulfides connect C74/C118 and C109/C124.

It belongs to the RcsF family.

The protein localises to the cell outer membrane. Functionally, essential component of the Rcs signaling system, which controls transcription of numerous genes. Plays a role in signal transduction from the cell surface to the histidine kinase RcsC. May detect outer membrane defects. The protein is Outer membrane lipoprotein RcsF of Escherichia coli O6:H1 (strain CFT073 / ATCC 700928 / UPEC).